The primary structure comprises 189 residues: MLPPALNIPKWLETNSHLLQPPVNNYCVYHPSSPATQGYTVMIVGGPNARTDYHINTTPEFFYQYKGSMLLRTVDESSTPPTFQDIPIHEGSLFLLPANTPHCPVRFKDTVGVVMEQPRKEGAVDAMRWYCRNKDCGKVVWEKRFVCTDLGTQVKQVVEEFAGDEEKRTCKACGVVARSKYEEGEVVQP.

Arginine 50 contributes to the O2 binding site. Fe cation-binding residues include histidine 54, glutamate 60, and histidine 102. Glutamate 60 contributes to the substrate binding site. Arginine 106 and glutamate 116 together coordinate substrate. Residues cysteine 131, cysteine 136, cysteine 170, and cysteine 173 each contribute to the a divalent metal cation site.

Belongs to the 3-HAO family. Fe(2+) serves as cofactor.

The protein localises to the cytoplasm. It carries out the reaction 3-hydroxyanthranilate + O2 = (2Z,4Z)-2-amino-3-carboxymuconate 6-semialdehyde. It functions in the pathway cofactor biosynthesis; NAD(+) biosynthesis; quinolinate from L-kynurenine: step 3/3. Catalyzes the oxidative ring opening of 3-hydroxyanthranilate to 2-amino-3-carboxymuconate semialdehyde, which spontaneously cyclizes to quinolinate. The protein is 3-hydroxyanthranilate 3,4-dioxygenase (bna1) of Aspergillus niger (strain ATCC MYA-4892 / CBS 513.88 / FGSC A1513).